A 427-amino-acid chain; its full sequence is 3-phosphoshikimate 1-carboxyvinyltransferase (427 aa).

3-phosphoshikimate is bound by residues Lys-22, Ser-23, and Arg-27. Position 22 (Lys-22) interacts with phosphoenolpyruvate. Gly-96 and Arg-124 together coordinate phosphoenolpyruvate. Positions 169, 170, 171, 197, 313, 336, and 340 each coordinate 3-phosphoshikimate. Residue Gln-171 coordinates phosphoenolpyruvate. Catalysis depends on Asp-313, which acts as the Proton acceptor. Residues Arg-344, Arg-386, and Lys-411 each coordinate phosphoenolpyruvate.

Belongs to the EPSP synthase family. As to quaternary structure, monomer.

The protein localises to the cytoplasm. It carries out the reaction 3-phosphoshikimate + phosphoenolpyruvate = 5-O-(1-carboxyvinyl)-3-phosphoshikimate + phosphate. The protein operates within metabolic intermediate biosynthesis; chorismate biosynthesis; chorismate from D-erythrose 4-phosphate and phosphoenolpyruvate: step 6/7. Its function is as follows. Catalyzes the transfer of the enolpyruvyl moiety of phosphoenolpyruvate (PEP) to the 5-hydroxyl of shikimate-3-phosphate (S3P) to produce enolpyruvyl shikimate-3-phosphate and inorganic phosphate. The chain is 3-phosphoshikimate 1-carboxyvinyltransferase from Salmonella heidelberg (strain SL476).